Reading from the N-terminus, the 304-residue chain is tRNA pseudouridine synthase B (304 aa).

Catalysis depends on Asp38, which acts as the Nucleophile.

This sequence belongs to the pseudouridine synthase TruB family. Type 1 subfamily.

The enzyme catalyses uridine(55) in tRNA = pseudouridine(55) in tRNA. Responsible for synthesis of pseudouridine from uracil-55 in the psi GC loop of transfer RNAs. This Listeria innocua serovar 6a (strain ATCC BAA-680 / CLIP 11262) protein is tRNA pseudouridine synthase B.